Reading from the N-terminus, the 248-residue chain is Cell division protein FtsQ (248 aa).

At 1–4 (MGTR) the chain is on the cytoplasmic side. A helical transmembrane segment spans residues 5 to 25 (LRALLGVLILLVLGGAGWLFL). Residues 26–248 (RWEPTLLPIR…RVAARAGNRR (223 aa)) lie on the Periplasmic side of the membrane. The POTRA domain maps to 32 to 101 (LPIRLIQIEG…DTLRVQVREY (70 aa)).

This sequence belongs to the FtsQ/DivIB family. FtsQ subfamily. As to quaternary structure, part of a complex composed of FtsB, FtsL and FtsQ.

Its subcellular location is the cell inner membrane. Essential cell division protein. May link together the upstream cell division proteins, which are predominantly cytoplasmic, with the downstream cell division proteins, which are predominantly periplasmic. May control correct divisome assembly. This Allochromatium vinosum (strain ATCC 17899 / DSM 180 / NBRC 103801 / NCIMB 10441 / D) (Chromatium vinosum) protein is Cell division protein FtsQ.